Reading from the N-terminus, the 650-residue chain is Chaperone protein DnaK (650 aa).

Phosphothreonine; by autocatalysis is present on Thr-200. Residues Ala-614–Gln-634 form a disordered region.

This sequence belongs to the heat shock protein 70 family.

Acts as a chaperone. This chain is Chaperone protein DnaK, found in Burkholderia cenocepacia (strain ATCC BAA-245 / DSM 16553 / LMG 16656 / NCTC 13227 / J2315 / CF5610) (Burkholderia cepacia (strain J2315)).